The following is a 573-amino-acid chain: MLO-like protein 11 (573 aa).

Over 1-19 (MGEGEENGNEADSNERSLA) the chain is Extracellular. A helical transmembrane segment spans residues 20–40 (LSPTWSVAIVLTVFVVVSLIV). The Cytoplasmic segment spans residues 41–69 (ERSIYRLSTWLRKTKRKPMFAALEKMKEE). Residues 70–90 (LMLLGFISLLLTATSSTIANI) form a helical membrane-spanning segment. The Extracellular portion of the chain corresponds to 91–163 (CVPSSFYNDR…SYEGLEQLHR (73 aa)). The helical transmembrane segment at 164–184 (FIFIMAVTHVTYSCLTMLLAI) threads the bilayer. The Cytoplasmic segment spans residues 185–287 (VKIHSWRIWE…IRSMEEEFQR (103 aa)). A run of 2 helical transmembrane segments spans residues 288-308 (IVGV…FNIK) and 309-329 (GSNL…LVGA). Over 330 to 371 (KLQHVIATLALENAGLTEYPSGVKLRPRDELFWFNKPELLLS) the chain is Cytoplasmic. A helical transmembrane segment spans residues 372–392 (LIHFILFQNSFELASFFWFWW). Residues 393–411 (QFGYSSCFLKNHYLVYFRL) are Extracellular-facing. A helical transmembrane segment spans residues 412–432 (LLGFAGQFLCSYSTLPLYALV). Residues 433–573 (TQMGTNYKAA…SSSLPSEKRV (141 aa)) lie on the Cytoplasmic side of the membrane. Residues 446–467 (QRIRETIRGWGKATRRKRRHGL) are calmodulin-binding. Disordered stretches follow at residues 500-532 (EQQR…TSSR) and 554-573 (RSEP…EKRV). Residues 507 to 516 (EQGTTELELQ) are compositionally biased toward low complexity. A compositionally biased stretch (polar residues) spans 561–573 (LSRSSSLPSEKRV).

It belongs to the MLO family.

The protein resides in the membrane. In terms of biological role, may be involved in modulation of pathogen defense and leaf cell death. Activity seems to be regulated by Ca(2+)-dependent calmodulin binding and seems not to require heterotrimeric G proteins. This is MLO-like protein 11 (MLO11) from Arabidopsis thaliana (Mouse-ear cress).